The sequence spans 541 residues: Protein wntless homolog (541 aa).

Over M1–C15 the chain is Cytoplasmic. Residues I16–A36 traverse the membrane as a helical segment. At P37–K232 the chain is on the lumenal side. The interaction with Wnt proteins stretch occupies residues M101–K232. The helical transmembrane segment at V233–W253 threads the bilayer. Residues R254–K268 lie on the Cytoplasmic side of the membrane. The helical transmembrane segment at V269 to I289 threads the bilayer. Residues G290 to R303 are Lumenal-facing. Residues Q304 to M324 traverse the membrane as a helical segment. Residues D325–H331 lie on the Cytoplasmic side of the membrane. Residues I332–F352 traverse the membrane as a helical segment. At D353 to A380 the chain is on the lumenal side. Residues F381–F401 form a helical membrane-spanning segment. Over Q402 to R431 the chain is Cytoplasmic. A helical membrane pass occupies residues F432–V452. Over S453–S471 the chain is Lumenal. Residues A472 to Y492 traverse the membrane as a helical segment. At A493–E541 the chain is on the cytoplasmic side.

This sequence belongs to the wntless family. As to quaternary structure, interacts with WNT3A. Interacts with WNT1, WNT3 and WNT5. In terms of processing, N-glycosylated. Expressed in the brain, skeletal muscle, heart muscle, lung, gut, liver, and kidney (at protein level). In the brain, expressed in the cortex, striatum, hippocampus and to a lesser extent in the cerebellum (at protein level). Expressed in kidney, lung, skin, intestine, brain, spinal cord, skeleton, eyes, excretion glands, tooth and palatal shelves. In the cerebellum, expressed in Purkinje cells.

The protein localises to the golgi apparatus membrane. Its subcellular location is the cytoplasmic vesicle membrane. It localises to the cell membrane. It is found in the endoplasmic reticulum membrane. The protein resides in the early endosome membrane. In terms of biological role, regulates Wnt proteins sorting and secretion in a feedback regulatory mechanism. This reciprocal interaction plays a key role in the regulation of expression, subcellular location, binding and organelle-specific association of Wnt proteins. Also plays an important role in establishment of the anterior-posterior body axis formation during development. This Mus musculus (Mouse) protein is Protein wntless homolog (Wls).